The sequence spans 255 residues: Short chain dehydrogenase adrF (255 aa).

Residues I11, R118, Y150, K154, and V183 each contribute to the NADP(+) site. Residue Y150 is the Proton acceptor of the active site. K154 (lowers pKa of active site Tyr) is an active-site residue.

Belongs to the short-chain dehydrogenases/reductases (SDR) family.

The protein operates within secondary metabolite biosynthesis; terpenoid biosynthesis. Its function is as follows. Short chain dehydrogenase; part of the gene cluster that mediates the biosynthesis of andrastins, meroterpenoid compounds that exhibit inhibitory activity against ras farnesyltransferase, suggesting that they could be promising leads for antitumor agents. The first step of the pathway is the synthesis of 3,5-dimethylorsellinic acid (DMOA) by the polyketide synthase adrD via condensation of one acetyl-CoA starter unit with 3 malonyl-CoA units and 2 methylations. DMAO is then converted to farnesyl-DMAO by the prenyltransferase adrG. The methyltransferase adrK catalyzes the methylation of the carboxyl group of farnesyl-DMAO to farnesyl-DMAO methyl ester which is further converted to epoxyfarnesyl-DMAO methyl ester by the FAD-dependent monooxygenase adrH. The terpene cyclase adrI then catalyzes the carbon skeletal rearrangement to generate the andrastin E, the first compound in the pathway having the andrastin scaffold, with the tetracyclic ring system. The post-cyclization tailoring enzymes adrF, adrE, adrJ, and adrA, are involved in the conversion of andrastin E into andrastin A. The short chain dehydrogenase adrF is responsible for the oxidation of the C-3 a hydroxyl group of andrastin E to yield the corresponding ketone, andrastin D. The ketoreductase adrE stereoselectively reduces the carbonyl moiety to reverse the stereochemistry of the C-3 position to yield andrastin F. The acetyltransferase adrJ is the acetyltransferase that attaches the acetyl group to the C-3 hydroxyl group of andrastin F to yield andrastin C. Finally, the cytochrome P450 monooxygenase adrA catalyzes two sequential oxidation reactions of the C-23 methyl group, to generate the corresponding alcohol andrastin B, and aldehyde andrastin A. This chain is Short chain dehydrogenase adrF, found in Penicillium rubens (strain ATCC 28089 / DSM 1075 / NRRL 1951 / Wisconsin 54-1255) (Penicillium chrysogenum).